We begin with the raw amino-acid sequence, 202 residues long: Protein GrpE (202 aa).

The segment covering 21–37 (EELKNEEVKEETHEHEH) has biased composition (basic and acidic residues). A disordered region spans residues 21-52 (EELKNEEVKEETHEHEHKHGGHTCCGKHGHKH). A compositionally biased stretch (basic residues) spans 38–51 (KHGGHTCCGKHGHK).

It belongs to the GrpE family. In terms of assembly, homodimer.

The protein resides in the cytoplasm. Its function is as follows. Participates actively in the response to hyperosmotic and heat shock by preventing the aggregation of stress-denatured proteins, in association with DnaK and GrpE. It is the nucleotide exchange factor for DnaK and may function as a thermosensor. Unfolded proteins bind initially to DnaJ; upon interaction with the DnaJ-bound protein, DnaK hydrolyzes its bound ATP, resulting in the formation of a stable complex. GrpE releases ADP from DnaK; ATP binding to DnaK triggers the release of the substrate protein, thus completing the reaction cycle. Several rounds of ATP-dependent interactions between DnaJ, DnaK and GrpE are required for fully efficient folding. In Fusobacterium nucleatum subsp. polymorphum (Fusobacterium polymorphum), this protein is Protein GrpE.